A 70-amino-acid chain; its full sequence is ATP synthase subunit c (70 aa).

2 helical membrane passes run 4–24 (IATA…NGLI) and 47–67 (FIGI…GFLL).

It belongs to the ATPase C chain family. F-type ATPases have 2 components, F(1) - the catalytic core - and F(0) - the membrane proton channel. F(1) has five subunits: alpha(3), beta(3), gamma(1), delta(1), epsilon(1). F(0) has three main subunits: a(1), b(2) and c(10-14). The alpha and beta chains form an alternating ring which encloses part of the gamma chain. F(1) is attached to F(0) by a central stalk formed by the gamma and epsilon chains, while a peripheral stalk is formed by the delta and b chains.

It localises to the cell membrane. F(1)F(0) ATP synthase produces ATP from ADP in the presence of a proton or sodium gradient. F-type ATPases consist of two structural domains, F(1) containing the extramembraneous catalytic core and F(0) containing the membrane proton channel, linked together by a central stalk and a peripheral stalk. During catalysis, ATP synthesis in the catalytic domain of F(1) is coupled via a rotary mechanism of the central stalk subunits to proton translocation. In terms of biological role, key component of the F(0) channel; it plays a direct role in translocation across the membrane. A homomeric c-ring of between 10-14 subunits forms the central stalk rotor element with the F(1) delta and epsilon subunits. In Exiguobacterium sibiricum (strain DSM 17290 / CCUG 55495 / CIP 109462 / JCM 13490 / 255-15), this protein is ATP synthase subunit c.